An 866-amino-acid polypeptide reads, in one-letter code: Glycoprotein gp2 (866 aa).

The first 25 residues, 1 to 25 (MGFIYARKLLLCMAVSIYAIGSTTT), serve as a signal peptide directing secretion. Disordered stretches follow at residues 24–185 (TTTE…TDTT) and 319–619 (TAAT…IVPQ). The N-linked (GlcNAc...) asparagine; by host glycan is linked to Asn-48. A compositionally biased stretch (low complexity) spans 319 to 442 (TAATTTAATT…PDSSTGSTST (124 aa)). Residues 443-463 (AEPSSTFTLTPSTATPSTDQF) are compositionally biased toward polar residues. 2 stretches are compositionally biased toward low complexity: residues 464 to 499 (TGSS…EAST) and 514 to 526 (TPDG…NTTP). An N-linked (GlcNAc...) asparagine; by host glycan is attached at Asn-518. Residues 535–561 (FADTQQTPDNGVSTQHTTINDHTTANA) are compositionally biased toward polar residues. Over residues 564–574 (HAGHHRGRAGG) the composition is skewed to basic residues. Residues Asn-611 and Asn-659 are each glycosylated (N-linked (GlcNAc...) asparagine; by host). A helical membrane pass occupies residues 835 to 855 (FALVAATTLTVTILCLLCCLY).

The protein resides in the virion membrane. Functionally, virulence factor. The chain is Glycoprotein gp2 from Equus caballus (Horse).